A 440-amino-acid chain; its full sequence is Alpha-methylserine aldolase (440 aa).

Lys255 carries the N6-(pyridoxal phosphate)lysine modification.

The protein belongs to the SHMT family. Alpha-methylserine aldolase subfamily. As to quaternary structure, homodimer. Pyridoxal 5'-phosphate serves as cofactor.

The catalysed reaction is 2-methyl-L-serine = formaldehyde + L-alanine. In terms of biological role, catalyzes the reversible interconversion of alpha-methyl-L-serine to L-alanine and formaldehyde. The protein is Alpha-methylserine aldolase of Variovorax paradoxus.